The following is a 305-amino-acid chain: Plant-type L-asparaginase (305 aa).

Thr175 serves as the catalytic Nucleophile. Substrate contacts are provided by residues 202–205 (RVGD) and 224–227 (TGLG).

It belongs to the Ntn-hydrolase family. As to quaternary structure, heterotetramer of two alpha and two beta chains arranged as a dimer of alpha/beta heterodimers. Post-translationally, autocleaved. Generates the alpha and beta subunits. The N-terminal residue of the beta subunit is thought to be responsible for the nucleophile hydrolase activity.

The enzyme catalyses L-asparagine + H2O = L-aspartate + NH4(+). Catalyzes the hydrolysis of L-asparagine into L-aspartate and ammonia. The polypeptide is Plant-type L-asparaginase (Pyrococcus horikoshii (strain ATCC 700860 / DSM 12428 / JCM 9974 / NBRC 100139 / OT-3)).